A 391-amino-acid polypeptide reads, in one-letter code: UPF0229 protein CA_C0580 (391 aa).

Disordered stretches follow at residues 1–20 (MAIF…TIGD) and 75–109 (VGSG…NSEG). Residues 96-106 (GSKGKGKGAGN) are compositionally biased toward gly residues.

It belongs to the UPF0229 family.

The chain is UPF0229 protein CA_C0580 from Clostridium acetobutylicum (strain ATCC 824 / DSM 792 / JCM 1419 / IAM 19013 / LMG 5710 / NBRC 13948 / NRRL B-527 / VKM B-1787 / 2291 / W).